The sequence spans 101 residues: Small ribosomal subunit protein uS10 (101 aa).

The protein belongs to the universal ribosomal protein uS10 family. As to quaternary structure, part of the 30S ribosomal subunit.

Involved in the binding of tRNA to the ribosomes. This Porphyromonas gingivalis (strain ATCC 33277 / DSM 20709 / CIP 103683 / JCM 12257 / NCTC 11834 / 2561) protein is Small ribosomal subunit protein uS10.